The chain runs to 937 residues: Isoleucine--tRNA ligase (937 aa).

Residues 58-68 carry the 'HIGH' region motif; sequence PYANGSIHIGH. L-isoleucyl-5'-AMP is bound at residue Glu561. Residues 602 to 606 carry the 'KMSKS' region motif; sequence KMSKS. Lys605 lines the ATP pocket. 4 residues coordinate Zn(2+): Cys900, Cys903, Cys920, and Cys923.

The protein belongs to the class-I aminoacyl-tRNA synthetase family. IleS type 1 subfamily. In terms of assembly, monomer. Requires Zn(2+) as cofactor.

The protein resides in the cytoplasm. It catalyses the reaction tRNA(Ile) + L-isoleucine + ATP = L-isoleucyl-tRNA(Ile) + AMP + diphosphate. Its function is as follows. Catalyzes the attachment of isoleucine to tRNA(Ile). As IleRS can inadvertently accommodate and process structurally similar amino acids such as valine, to avoid such errors it has two additional distinct tRNA(Ile)-dependent editing activities. One activity is designated as 'pretransfer' editing and involves the hydrolysis of activated Val-AMP. The other activity is designated 'posttransfer' editing and involves deacylation of mischarged Val-tRNA(Ile). The polypeptide is Isoleucine--tRNA ligase (Pectobacterium atrosepticum (strain SCRI 1043 / ATCC BAA-672) (Erwinia carotovora subsp. atroseptica)).